The primary structure comprises 170 residues: Acireductone dioxygenase (170 aa).

Fe(2+)-binding residues include histidine 99, histidine 101, glutamate 105, and histidine 144. Ni(2+)-binding residues include histidine 99, histidine 101, glutamate 105, and histidine 144.

It belongs to the acireductone dioxygenase (ARD) family. Monomer. Fe(2+) is required as a cofactor. Requires Ni(2+) as cofactor.

The enzyme catalyses 1,2-dihydroxy-5-(methylsulfanyl)pent-1-en-3-one + O2 = 3-(methylsulfanyl)propanoate + CO + formate + 2 H(+). It catalyses the reaction 1,2-dihydroxy-5-(methylsulfanyl)pent-1-en-3-one + O2 = 4-methylsulfanyl-2-oxobutanoate + formate + 2 H(+). The protein operates within amino-acid biosynthesis; L-methionine biosynthesis via salvage pathway; L-methionine from S-methyl-5-thio-alpha-D-ribose 1-phosphate: step 5/6. Functionally, catalyzes 2 different reactions between oxygen and the acireductone 1,2-dihydroxy-3-keto-5-methylthiopentene (DHK-MTPene) depending upon the metal bound in the active site. Fe-containing acireductone dioxygenase (Fe-ARD) produces formate and 2-keto-4-methylthiobutyrate (KMTB), the alpha-ketoacid precursor of methionine in the methionine recycle pathway. Ni-containing acireductone dioxygenase (Ni-ARD) produces methylthiopropionate, carbon monoxide and formate, and does not lie on the methionine recycle pathway. This chain is Acireductone dioxygenase, found in Bacillus anthracis.